We begin with the raw amino-acid sequence, 508 residues long: Photosystem II CP47 reaction center protein (508 aa).

Transmembrane regions (helical) follow at residues 21–36, 101–115, 140–156, 203–218, 237–252, and 457–472; these read SVHIMHTALVAGWAGS, IVFSGLCFLAAIWHW, GIHLFLSGVACFGFGAF, IAAGTLGILAGLFHLS, VLSSSIAAVFFAAFVV, and SFALLFFFGHIWHGSR.

Belongs to the PsbB/PsbC family. PsbB subfamily. As to quaternary structure, PSII is composed of 1 copy each of membrane proteins PsbA, PsbB, PsbC, PsbD, PsbE, PsbF, PsbH, PsbI, PsbJ, PsbK, PsbL, PsbM, PsbT, PsbX, PsbY, PsbZ, Psb30/Ycf12, at least 3 peripheral proteins of the oxygen-evolving complex and a large number of cofactors. It forms dimeric complexes. It depends on Binds multiple chlorophylls. PSII binds additional chlorophylls, carotenoids and specific lipids. as a cofactor.

The protein localises to the plastid. The protein resides in the chloroplast thylakoid membrane. One of the components of the core complex of photosystem II (PSII). It binds chlorophyll and helps catalyze the primary light-induced photochemical processes of PSII. PSII is a light-driven water:plastoquinone oxidoreductase, using light energy to abstract electrons from H(2)O, generating O(2) and a proton gradient subsequently used for ATP formation. This Lepidium virginicum (Virginia pepperweed) protein is Photosystem II CP47 reaction center protein.